A 741-amino-acid polypeptide reads, in one-letter code: Melanoma-associated antigen D4 (741 aa).

Over residues 1–13 the composition is skewed to polar residues; it reads MAEGSFSVQSESY. 4 disordered regions span residues 1–27, 136–206, 247–296, and 323–379; these read MAEGSFSVQSESYSVEDMDEGSDEVGE, RVAT…EGPS, MAFP…KALA, and PEGA…QPSL. Residues 14–27 are compositionally biased toward acidic residues; it reads SVEDMDEGSDEVGE. 2 stretches are compositionally biased toward polar residues: residues 140 to 151 and 187 to 196; these read PQVSGEDTQPTT and TSAQSQTGSP. Over residues 354 to 363 the composition is skewed to acidic residues; it reads DEYESSEEER. Residues 413–611 form the MAGE domain; sequence LQERANKLVK…REWKAHFLEA (199 aa). Positions 700 to 720 are disordered; the sequence is VSSGTNGGASTSVLDGPSTSS. Polar residues predominate over residues 701–720; sequence SSGTNGGASTSVLDGPSTSS.

As to quaternary structure, interacts with TRIM27. In terms of tissue distribution, expressed only in brain and ovary among normal tissues. Isoform 1 and isoform 2 are specifically expressed in glioma cells among cancer cells. Detected in some renal cell carcinoma samples.

In terms of biological role, may enhance ubiquitin ligase activity of RING-type zinc finger-containing E3 ubiquitin-protein ligases. Proposed to act through recruitment and/or stabilization of the Ubl-conjugating enzyme (E2) at the E3:substrate complex. The chain is Melanoma-associated antigen D4 (MAGED4) from Homo sapiens (Human).